The sequence spans 467 residues: Glutamine synthetase (467 aa).

A GS beta-grasp domain is found at 11 to 95 (HDVKWIDLRF…IVCDIIEPST (85 aa)). The region spanning 103–467 (PRAIARRAEE…PLEYDLYYSV (365 aa)) is the GS catalytic domain. 2 residues coordinate Mg(2+): Glu128 and Glu130. Residue Glu206 coordinates ATP. The Mg(2+) site is built by Glu211 and Glu219. L-glutamate-binding positions include 263-264 (NG) and Gly264. His268 is a binding site for Mg(2+). Residues 270–272 (HMS) and Ser272 each bind ATP. L-glutamate-binding residues include Arg320, Glu326, and Arg338. Arg338, Arg343, and Lys351 together coordinate ATP. Glu356 contacts Mg(2+). Residue Arg358 participates in L-glutamate binding. Tyr396 carries the post-translational modification O-AMP-tyrosine.

This sequence belongs to the glutamine synthetase family. Oligomer of 12 subunits arranged in the form of two hexameric ring. The cofactor is Mg(2+).

The protein localises to the cytoplasm. It carries out the reaction L-glutamate + NH4(+) + ATP = L-glutamine + ADP + phosphate + H(+). Its activity is regulated as follows. The activity of this enzyme could be controlled by adenylation under conditions of abundant glutamine. Catalyzes the ATP-dependent biosynthesis of glutamine from glutamate and ammonia. This Azotobacter vinelandii protein is Glutamine synthetase.